The chain runs to 177 residues: Large ribosomal subunit protein uL6 (177 aa).

It belongs to the universal ribosomal protein uL6 family. As to quaternary structure, part of the 50S ribosomal subunit.

Functionally, this protein binds to the 23S rRNA, and is important in its secondary structure. It is located near the subunit interface in the base of the L7/L12 stalk, and near the tRNA binding site of the peptidyltransferase center. This Delftia acidovorans (strain DSM 14801 / SPH-1) protein is Large ribosomal subunit protein uL6.